Consider the following 173-residue polypeptide: Large ribosomal subunit protein uL10 (173 aa).

Belongs to the universal ribosomal protein uL10 family. In terms of assembly, part of the ribosomal stalk of the 50S ribosomal subunit. The N-terminus interacts with L11 and the large rRNA to form the base of the stalk. The C-terminus forms an elongated spine to which L12 dimers bind in a sequential fashion forming a multimeric L10(L12)X complex.

In terms of biological role, forms part of the ribosomal stalk, playing a central role in the interaction of the ribosome with GTP-bound translation factors. The polypeptide is Large ribosomal subunit protein uL10 (Thiobacillus denitrificans (strain ATCC 25259 / T1)).